The following is a 185-amino-acid chain: Ribosome-recycling factor (185 aa).

Belongs to the RRF family.

The protein localises to the cytoplasm. Its function is as follows. Responsible for the release of ribosomes from messenger RNA at the termination of protein biosynthesis. May increase the efficiency of translation by recycling ribosomes from one round of translation to another. The chain is Ribosome-recycling factor from Kocuria rhizophila (strain ATCC 9341 / DSM 348 / NBRC 103217 / DC2201).